A 307-amino-acid chain; its full sequence is Ribonuclease Z (307 aa).

Residues His63, His65, Asp67, His68, His140, Asp211, and His269 each coordinate Zn(2+). The active-site Proton acceptor is the Asp67.

The protein belongs to the RNase Z family. Homodimer. Zn(2+) is required as a cofactor.

The catalysed reaction is Endonucleolytic cleavage of RNA, removing extra 3' nucleotides from tRNA precursor, generating 3' termini of tRNAs. A 3'-hydroxy group is left at the tRNA terminus and a 5'-phosphoryl group is left at the trailer molecule.. In terms of biological role, zinc phosphodiesterase, which displays some tRNA 3'-processing endonuclease activity. Probably involved in tRNA maturation, by removing a 3'-trailer from precursor tRNA. The polypeptide is Ribonuclease Z (Bacillus subtilis (strain 168)).